The primary structure comprises 105 residues: uncharacterized protein (105 aa).

This is an uncharacterized protein from Microplitis demolitor (Parasitoid wasp).